The following is a 354-amino-acid chain: Short-chain dehydrogenase/reductase SAT2 (354 aa).

Residues I31, D85, R201, and V233 each contribute to the NADP(+) site.

Belongs to the short-chain dehydrogenases/reductases (SDR) family.

It participates in mycotoxin biosynthesis. Functionally, short-chain dehydrogenase/reductase; part of the satratoxin SC1 cluster involved in the biosynthesis of satratoxins, trichothecene mycotoxins that are associated with human food poisonings. Satratoxins are suggested to be made by products of multiple gene clusters (SC1, SC2 and SC3) that encode 21 proteins in all, including polyketide synthases, acetyltransferases, and other enzymes expected to modify the trichothecene skeleton. SC1 encodes 10 proteins, SAT1 to SAT10. The largest are SAT8, which encodes a putative polyketide synthase (PKS) with a conventional non-reducing architecture, and SAT10, a putative protein containing four ankyrin repeats and thus may be involved in protein scaffolding. The putative short-chain reductase SAT3 may assist the PKS in some capacity. SAT6 contains a secretory lipase domain and acts probably as a trichothecene esterase. SAT5 encodes a putative acetyltransferase, and so, with SAT6, may affect endogenous protection from toxicity. The probable transcription factor SAT9 may regulate the expression of the SC1 cluster. SC2 encodes proteins SAT11 to SAT16, the largest of which encodes the putative reducing PKS SAT13. SAT11 is a cytochrome P450 monooxygenase, while SAT14 and SAT16 are probable acetyltransferases. The SC2 cluster may be regulated by the transcription factor SAT15. SC3 is a small cluster that encodes 5 proteins, SAT17 to SAT21. SAT21 is a putative MFS-type transporter which may have a role in exporting secondary metabolites. The four other proteins putatively encoded in SC3 include the taurine hydroxylase-like protein SAT17, the O-methyltransferase SAT18, the acetyltransferase SAT19, and the Cys6-type zinc finger SAT20, the latter being probably involved in regulation of SC3 expression. The sequence is that of Short-chain dehydrogenase/reductase SAT2 from Stachybotrys chartarum (strain CBS 109288 / IBT 7711) (Toxic black mold).